The following is a 278-amino-acid chain: Glucosamine-6-phosphate deaminase (278 aa).

Catalysis depends on D72, which acts as the Proton acceptor; for enolization step. D141 acts as the For ring-opening step in catalysis. Residue H143 is the Proton acceptor; for ring-opening step of the active site. E148 acts as the For ring-opening step in catalysis.

This sequence belongs to the glucosamine/galactosamine-6-phosphate isomerase family. As to quaternary structure, homohexamer.

It is found in the cytoplasm. It carries out the reaction alpha-D-glucosamine 6-phosphate + H2O = beta-D-fructose 6-phosphate + NH4(+). It functions in the pathway nucleotide-sugar biosynthesis; UDP-N-acetyl-alpha-D-glucosamine biosynthesis; alpha-D-glucosamine 6-phosphate from D-fructose 6-phosphate: step 1/1. Catalyzes the reversible conversion of alpha-D-glucosamine 6-phosphate (GlcN-6P) into beta-D-fructose 6-phosphate (Fru-6P) and ammonium ion, a regulatory reaction step in de novo uridine diphosphate-N-acetyl-alpha-D-glucosamine (UDP-GlcNAc) biosynthesis via hexosamine pathway. The protein is Glucosamine-6-phosphate deaminase (Gnpda1) of Aedes aegypti (Yellowfever mosquito).